A 548-amino-acid chain; its full sequence is Copine-2 (548 aa).

C2 domains follow at residues 6–131 (DGGA…TRPL) and 138–263 (PAGK…PLEI). Ca(2+) contacts are provided by aspartate 39, aspartate 45, aspartate 97, aspartate 99, serine 102, aspartate 109, aspartate 170, aspartate 176, aspartate 232, aspartate 234, and aspartate 240. Positions 247 to 304 (TSVLQMSEARDGVPLEIECINPKKQRKKKSYKNSGIIILRSCKIHRNYSFLDYILGGC) are linker region. Positions 305-507 (QLMFTVGIDF…AARDIVQFVP (203 aa)) constitute a VWFA domain.

This sequence belongs to the copine family. Ca(2+) is required as a cofactor.

It is found in the cytoplasm. The protein resides in the nucleus. It localises to the cell membrane. In terms of biological role, calcium-dependent phospholipid-binding protein that plays a role in calcium-mediated intracellular processes. Exhibits calcium-dependent cell membrane binding properties. This Mus musculus (Mouse) protein is Copine-2.